The following is a 440-amino-acid chain: Tripartite motif-containing protein 14 (440 aa).

The segment at 17–59 adopts a B box-type zinc-finger fold; sequence AYGWRCPEHSERPAELFCRRCGRCVCALCPVLGAHRGHPVGLA. Zn(2+)-binding residues include cysteine 22, histidine 25, cysteine 45, and histidine 51. Residues 247-440 form the B30.2/SPRY domain; it reads ALLKTSPSPE…EGPISIPRLP (194 aa).

It belongs to the TRIM/RBCC family. In terms of assembly, interacts with MAVS. Interacts with WRNIP1 and PPP6C; these interactions positively regulate the RIG-I signaling pathway. Interacts with CGAS; this interaction stabilizes CGAS and promotes type I interferon production. Interacts with USP14; this interaction mediates the cleavage of 'Lys-48'-linked ubiquitination of CGAS. Interacts with TBK1. Interacts with SPI1. Interacts with KDM4D and USP14. Post-translationally, ubiquitinated. Undergoes 'Lys-63'-linked polyubiquitination; this modification allows IKBKG/NEMO recruitment to MAVS. Undergoes 'Lys-48'-linked polyubiquitination by RNF125; this modification mediates its degradation via the ubiquitin-proteasome pathway. In terms of tissue distribution, expressed with high level in spleen, thymus, liver and testis. Expressed with low level in the brain, kidney, and skeletal muscle. Expressed in various differentiation stages of B-lymphocytes.

It localises to the mitochondrion outer membrane. It is found in the cytoplasmic vesicle. Its subcellular location is the phagosome. Functionally, plays a role in the innate immune defense against viruses. Facilitates the type I IFN response by interacting with MAVS at the outer mitochondria membrane and thereby recruiting NF-kappa-B essential modulator IKBKG/NEMO to the MAVS signalosome, leading to the activation of both the IFN regulatory factor 3/IRF3 and NF-kappa-B pathways. Positively regulates the CGAS-induced type I interferon signaling pathway by stabilizing CGAS and inhibiting its autophagic degradation. Inhibits the transcriptional activity of SPI1 in a dose-dependent manner. Also inhibits OPTN-mediated selective autophagic degradation of KDM4D and thereby negatively regulates H3K9me2 and H3K9me3. Mechanistically, recruits USP14 to remove the 'Lys-63'-linked ubiquitination of KDM4D, preventing its recognition by OPTN and subsequent degradation. Its function is as follows. Plays an essential role in the innate immune defense against viruses and bacteria. Facilitates the type I IFN response by interacting with MAVS at the outer mitochondria membrane and thereby recruiting NF-kappa-B essential modulator IKBKG/NEMO to the MAVS signalosome, leading to the activation of both the IFN regulatory factor 3/IRF3 and NF-kappa-B pathways. Positively regulates the CGAS-induced type I interferon signaling pathway by stabilizing CGAS and inhibiting its autophagic degradation. Acts as a scaffold between TBK1 and STAT3 to promote phosphorylation of STAT3 and resolve interferon-stimulated gene (ISG) expression. Inhibits the transcriptional activity of SPI1 in a dose-dependent manner. The polypeptide is Tripartite motif-containing protein 14 (Trim14) (Mus musculus (Mouse)).